The following is a 290-amino-acid chain: Glycine--tRNA ligase alpha subunit (290 aa).

The protein belongs to the class-II aminoacyl-tRNA synthetase family. In terms of assembly, tetramer of two alpha and two beta subunits.

The protein localises to the cytoplasm. The catalysed reaction is tRNA(Gly) + glycine + ATP = glycyl-tRNA(Gly) + AMP + diphosphate. The protein is Glycine--tRNA ligase alpha subunit of Synechococcus sp. (strain CC9902).